Here is a 385-residue protein sequence, read N- to C-terminus: G2/mitotic-specific cyclin-B3 (385 aa).

A compositionally biased stretch (polar residues) spans 1–16 (MMLRSQAKNVDLTSQA). 2 disordered regions span residues 1-48 (MMLR…HSKG) and 63-88 (SAKR…QKSR). Composition is skewed to basic and acidic residues over residues 17–28 (DSRHQQKRKQAE) and 63–80 (SAKR…RDVE).

The protein belongs to the cyclin family. Cyclin AB subfamily.

The protein localises to the nucleus. Functionally, could be involved at the G2/M (mitosis) transition. Interacts with the CDK1 and CDK2 protein kinases. G2/M cyclins accumulate steadily during G2 and are abruptly destroyed at mitosis. Plays a role during oocyte meiosis II. The sequence is that of G2/mitotic-specific cyclin-B3 (cyb-3) from Caenorhabditis elegans.